Here is a 362-residue protein sequence, read N- to C-terminus: Chorismate synthase (362 aa).

Arginine 46 is an NADP(+) binding site. Residues 122-124 (RSS), 238-239 (NA), glycine 278, 293-297 (KPTPS), and arginine 319 contribute to the FMN site.

The protein belongs to the chorismate synthase family. Homotetramer. It depends on FMNH2 as a cofactor.

It catalyses the reaction 5-O-(1-carboxyvinyl)-3-phosphoshikimate = chorismate + phosphate. The protein operates within metabolic intermediate biosynthesis; chorismate biosynthesis; chorismate from D-erythrose 4-phosphate and phosphoenolpyruvate: step 7/7. In terms of biological role, catalyzes the anti-1,4-elimination of the C-3 phosphate and the C-6 proR hydrogen from 5-enolpyruvylshikimate-3-phosphate (EPSP) to yield chorismate, which is the branch point compound that serves as the starting substrate for the three terminal pathways of aromatic amino acid biosynthesis. This reaction introduces a second double bond into the aromatic ring system. The sequence is that of Chorismate synthase from Campylobacter jejuni subsp. jejuni serotype O:23/36 (strain 81-176).